The primary structure comprises 288 residues: MTWRSRREALRAILSGSRCARPASVFDPISMRIAEDLGFEVGMFGGSVASLAILGDPDIALITLTELAEQVRRMSRAAALPILVDADHGYGNALNVRRTVQELEGAGAAGLTIEDTALPQPFGEATPQLIAIEEGFGKIKAALDARGDPTLVIVGRTGALAITSLEDAIERAQAYEAAGVDALFFTAVKTRAQLEAIAAATTLPIVLGGPSEEISDWDYLAAQRVRIAVQGHAPIAAATQAVFDTLKAAAAGTPPMQLQGLASSELMDWVTRAALVKQRGANFLGLKK.

A substrate-binding site is contributed by Ser47. Residue Asp85 coordinates Mg(2+). Substrate is bound by residues Arg156 and His232.

Belongs to the isocitrate lyase/PEP mutase superfamily. Oxaloacetate decarboxylase family. As to quaternary structure, homotetramer; dimer of dimers. Requires Mg(2+) as cofactor.

The enzyme catalyses oxaloacetate + H(+) = pyruvate + CO2. In terms of biological role, catalyzes the decarboxylation of oxaloacetate into pyruvate. Seems to play a role in maintaining cellular concentrations of bicarbonate and pyruvate. The chain is Oxaloacetate decarboxylase from Rhodopseudomonas palustris (strain BisB18).